The primary structure comprises 281 residues: Para-Rep C1 (281 aa).

Positions 3-97 (TLQGTFWCFT…VAGPWTYGEL (95 aa)) constitute a CRESS-DNA virus Rep endonuclease domain. Positions 10 to 13 (CFTL) match the RCR-1 motif. Residues Glu36 and His42 each contribute to the a divalent metal cation site. Positions 42 to 44 (HLQ) match the RCR-2 motif. The Nuclear localization signal motif lies at 51-71 (KRSTLKMMKELLPGAHLEVSK). The active-site For DNA cleavage activity is the Tyr80. The RCR-3 signature appears at 80–83 (YAMK). An a divalent metal cation-binding site is contributed by Glu85. A Nuclear localization signal motif is present at residues 97–103 (LLKKGSN). Residue 173–181 (GPQGGEGKT) participates in ATP binding.

It belongs to the nanoviridea/circoviridae replication-associated protein family. As to quaternary structure, homooligomer (Potential). Rep binds to repeated DNA motifs (iterons). The cofactor is Mg(2+). It depends on Mn(2+) as a cofactor.

The protein resides in the host nucleus. It carries out the reaction ATP + H2O = ADP + phosphate + H(+). Its function is as follows. Initiates and terminates the replication only of its own subviral DNA molecule. The closed circular ssDNA genome is first converted to a superhelical dsDNA. Rep binds a specific hairpin at the genome origin of replication. Introduces an endonucleolytic nick within the intergenic region of the genome, thereby initiating the rolling circle replication (RCR). Following cleavage, binds covalently to the 5'-phosphate of DNA as a tyrosyl ester. The cleavage gives rise to a free 3'-OH that serves as a primer for the cellular DNA polymerase. The polymerase synthesizes the (+) strand DNA by rolling circle mechanism. After one round of replication, a Rep-catalyzed nucleotidyl transfer reaction releases a circular single-stranded virus genome, thereby terminating the replication. Displays origin-specific DNA cleavage, nucleotidyl transferase, ATPase and helicase activities. This chain is Para-Rep C1 (C1), found in Milk vetch dwarf C1 alphasatellite (MVDC1A).